Consider the following 142-residue polypeptide: Nucleoside diphosphate kinase (142 aa).

6 residues coordinate ATP: lysine 11, phenylalanine 59, arginine 87, threonine 93, arginine 104, and asparagine 114. Histidine 117 functions as the Pros-phosphohistidine intermediate in the catalytic mechanism.

Belongs to the NDK family. As to quaternary structure, homotetramer. Requires Mg(2+) as cofactor.

The protein resides in the cytoplasm. It carries out the reaction dZDP + ATP = dZTP + ADP. The enzyme catalyses a 2'-deoxyribonucleoside 5'-diphosphate + ATP = a 2'-deoxyribonucleoside 5'-triphosphate + ADP. It catalyses the reaction a ribonucleoside 5'-diphosphate + ATP = a ribonucleoside 5'-triphosphate + ADP. Its pathway is purine metabolism. Major role in the synthesis of nucleoside triphosphates other than ATP. The ATP gamma phosphate is transferred to the NDP beta phosphate via a ping-pong mechanism, using a phosphorylated active-site intermediate. Functionally, (Microbial infection) Catalyzes the phosphorylation of dZDP to dZTP, when the bacterium is infected by a phage that produces the substrate for the synthesis of dZTP (2- amino-2'-deoxyadenosine 5'-triphosphate), which is then used by the phage as a DNA polymerase substrate. The polypeptide is Nucleoside diphosphate kinase (Vibrio cholerae serotype O1 (strain ATCC 39315 / El Tor Inaba N16961)).